We begin with the raw amino-acid sequence, 327 residues long: Biotin synthase (327 aa).

Residues 49–273 (FNKDKIDLCS…ICIARIALPD (225 aa)) form the Radical SAM core domain. C67, C71, and C74 together coordinate [4Fe-4S] cluster. Residues S110, C142, C201, and R277 each contribute to the [2Fe-2S] cluster site.

This sequence belongs to the radical SAM superfamily. Biotin synthase family. As to quaternary structure, homodimer. [4Fe-4S] cluster serves as cofactor. The cofactor is [2Fe-2S] cluster.

It catalyses the reaction (4R,5S)-dethiobiotin + (sulfur carrier)-SH + 2 reduced [2Fe-2S]-[ferredoxin] + 2 S-adenosyl-L-methionine = (sulfur carrier)-H + biotin + 2 5'-deoxyadenosine + 2 L-methionine + 2 oxidized [2Fe-2S]-[ferredoxin]. It functions in the pathway cofactor biosynthesis; biotin biosynthesis; biotin from 7,8-diaminononanoate: step 2/2. Functionally, catalyzes the conversion of dethiobiotin (DTB) to biotin by the insertion of a sulfur atom into dethiobiotin via a radical-based mechanism. The chain is Biotin synthase from Methanococcus maripaludis (strain C6 / ATCC BAA-1332).